Consider the following 300-residue polypeptide: Delta-9 desaturase-like 4 protein (300 aa).

2 consecutive transmembrane segments (helical) span residues 39 to 59 and 61 to 81; these read VVVI…WEAL and FGLV…HRNL. The Histidine box-1 signature appears at 78–83; the sequence is HRNLSH. A Histidine box-2 motif is present at residues 115–119; it reads HRFHH. The next 2 membrane-spanning stretches (helical) occupy residues 175–195 and 200–220; these read IAVH…LPYL and GVGI…CHIW. The Histidine box-3 motif lies at 247-251; that stretch reads HNNHH.

It belongs to the fatty acid desaturase type 1 family. The cofactor is Fe cation.

It localises to the endoplasmic reticulum membrane. The protein operates within lipid metabolism; polyunsaturated fatty acid biosynthesis. This Arabidopsis thaliana (Mouse-ear cress) protein is Delta-9 desaturase-like 4 protein.